Here is a 262-residue protein sequence, read N- to C-terminus: Carboxy-S-adenosyl-L-methionine synthase (262 aa).

Residues Tyr50, 84–86 (GCS), 137–138 (DI), Asn152, and Arg219 each bind S-adenosyl-L-methionine.

This sequence belongs to the class I-like SAM-binding methyltransferase superfamily. Cx-SAM synthase family. As to quaternary structure, homodimer.

It catalyses the reaction prephenate + S-adenosyl-L-methionine = carboxy-S-adenosyl-L-methionine + 3-phenylpyruvate + H2O. Catalyzes the conversion of S-adenosyl-L-methionine (SAM) to carboxy-S-adenosyl-L-methionine (Cx-SAM). This is Carboxy-S-adenosyl-L-methionine synthase from Psychrobacter arcticus (strain DSM 17307 / VKM B-2377 / 273-4).